The following is a 195-amino-acid chain: Cysteine/O-acetylserine efflux protein (195 aa).

Residues 1-7 (MTPTLLS) are Periplasmic-facing. The helical transmembrane segment at 8-28 (AFWTYTLITAMTPGPNNILAL) threads the bilayer. Topologically, residues 29–46 (SSATSHGFRQSTRVLAGM) are cytoplasmic. The chain crosses the membrane as a helical span at residues 47 to 67 (SLGFLIVMLLCAGISFSLAVI). Residues 68–69 (DP) lie on the Periplasmic side of the membrane. A helical membrane pass occupies residues 70 to 90 (AAVHLLSWAGAAYIVWLAWKI). Residues 91–104 (ATSPTKEDGLQTKP) are Cytoplasmic-facing. A helical membrane pass occupies residues 105-125 (ISFWASFALQFVNVKIILYGV). At 126-141 (TALSTFVLPQTQALSW) the chain is on the periplasmic side. The helical transmembrane segment at 142 to 162 (VVGVSVLLAMIGTFGNVCWAL) threads the bilayer. Over 163-176 (AGHLFQRLFRQYGR) the chain is Cytoplasmic. A helical membrane pass occupies residues 177–194 (QLNIVLALLLVYCAVRIF). Position 195 (Tyr-195) is a topological domain, periplasmic.

Belongs to the Rht family.

The protein localises to the cell inner membrane. It carries out the reaction O-acetyl-L-serine(in) = O-acetyl-L-serine(out). The enzyme catalyses L-cysteine(in) = L-cysteine(out). In terms of biological role, exporter of O-acetylserine (OAS) and cysteine. This is Cysteine/O-acetylserine efflux protein (eamB) from Escherichia coli O1:K1 / APEC.